The chain runs to 309 residues: Metal ABC transporter substrate-binding lipoprotein FimA (309 aa).

The N-terminal stretch at 1–20 (MKKIASVLALFVALLFGLLA) is a signal peptide. Cys21 carries the N-palmitoyl cysteine lipid modification. Cys21 is lipidated: S-diacylglycerol cysteine. Residues His67, His139, Glu205, and Asp280 each coordinate a divalent metal cation.

This sequence belongs to the bacterial solute-binding protein 9 family. Lipoprotein receptor antigen (Lrai) subfamily.

The protein localises to the cell membrane. Functionally, part of an ATP-binding cassette (ABC) transport system involved in metal import. Binds a metal with high affinity and specificity and delivers it to the membrane permease for translocation into the cytoplasm. Also acts as an adhesin which is involved on adherence to extracellular matrix. It is an important factor in pathogenesis and infection. May contribute to the formation and accumulation of dental plaque. The protein is Metal ABC transporter substrate-binding lipoprotein FimA (fimA) of Streptococcus parasanguinis.